Here is a 210-residue protein sequence, read N- to C-terminus: Large ribosomal subunit protein uL16 (210 aa).

This sequence belongs to the universal ribosomal protein uL16 family. As to quaternary structure, component of the large ribosomal subunit. Mature ribosomes consist of a small (40S) and a large (60S) subunit. The 40S subunit contains about 33 different proteins and 1 molecule of RNA (18S). The 60S subunit contains about 49 different proteins and 3 molecules of RNA (28S, 5.8S and 5S).

Its subcellular location is the cytoplasm. Component of the large ribosomal subunit. Plays a role in the formation of actively translating ribosomes. In terms of biological role, (Microbial infection) Seems to bind to the leucine zipper of viral and cellular JUN. This is Large ribosomal subunit protein uL16 from Gallus gallus (Chicken).